An 81-amino-acid polypeptide reads, in one-letter code: Large ribosomal subunit protein bL31B (81 aa).

Belongs to the bacterial ribosomal protein bL31 family. Type B subfamily. In terms of assembly, part of the 50S ribosomal subunit.

This chain is Large ribosomal subunit protein bL31B, found in Oceanobacillus iheyensis (strain DSM 14371 / CIP 107618 / JCM 11309 / KCTC 3954 / HTE831).